A 312-amino-acid polypeptide reads, in one-letter code: Malate dehydrogenase (312 aa).

NAD(+) contacts are provided by residues 7–13 (GAAGGIG) and aspartate 34. Residues arginine 81 and arginine 87 each contribute to the substrate site. NAD(+) is bound by residues asparagine 94 and 117-119 (ITN). The substrate site is built by asparagine 119 and arginine 153. The active-site Proton acceptor is the histidine 177. Methionine 227 provides a ligand contact to NAD(+).

It belongs to the LDH/MDH superfamily. MDH type 1 family. In terms of assembly, homodimer.

It carries out the reaction (S)-malate + NAD(+) = oxaloacetate + NADH + H(+). Catalyzes the reversible oxidation of malate to oxaloacetate. In Edwardsiella ictaluri (strain 93-146), this protein is Malate dehydrogenase.